Consider the following 84-residue polypeptide: M-zodatoxin-Lt2a (84 aa).

Positions 1-22 are cleaved as a signal peptide; it reads MKYFVIALALAVALVCIAESTA. Residues 23–58 constitute a propeptide that is removed on maturation; it reads YEVNEELENELDDLDDAAWLAVAEELQGLEDFEESR. The Processing quadruplet motif motif lies at 55-58; it reads EESR.

Post-translationally, cleavage of the propeptide depends on the processing quadruplet motif (XXXR, with at least one of X being E). In terms of tissue distribution, expressed by the venom gland.

Its subcellular location is the secreted. In terms of biological role, it has antimicrobial activity against Gram-positive bacteria (A.globiformis VKM Ac-1112 (MIC=0.7 uM), and B.subtilis VKM B-501 (MIC=0.4 uM)), Gram-negative bacteria (E.coli DH5-alpha (MIC=1.0 uM), E.coli MH1 (MIC=0.7 uM), and P.aeruginosa PAO1 (MIC=6.7 uM)), and yeasts (P.pastoris GS115 (MIC=6.7 uM), and S.cerevisiae Y190 (MIC=54 uM)). Also has a strong hemolytic activity against rabbit erythrocytes. Causes paralysis, but is not lethal when injected into insect (M.domestica) larvae. This chain is M-zodatoxin-Lt2a, found in Lachesana tarabaevi (Spider).